The chain runs to 892 residues: Translation initiation factor IF-2 (892 aa).

Over residues 138–185 (QRNLAEQQRLAEVDRQRVEEQERKRREEEQAELERQKTESRVVEEILV) the composition is skewed to basic and acidic residues. Disordered regions lie at residues 138–250 (QRNL…EDDS) and 262–298 (AAER…SGAH). The segment covering 207 to 219 (LPRTVRPTPAARP) has biased composition (low complexity). Residues 391–560 (PRPPVVTIMG…SIQAEVLELK (170 aa)) enclose the tr-type G domain. GTP is bound by residues 400–407 (GHVDHGKT), 446–450 (DTPGH), and 500–503 (SKID).

It belongs to the TRAFAC class translation factor GTPase superfamily. Classic translation factor GTPase family. IF-2 subfamily.

The protein localises to the cytoplasm. Functionally, one of the essential components for the initiation of protein synthesis. Protects formylmethionyl-tRNA from spontaneous hydrolysis and promotes its binding to the 30S ribosomal subunits. Also involved in the hydrolysis of GTP during the formation of the 70S ribosomal complex. This is Translation initiation factor IF-2 from Xylella fastidiosa (strain Temecula1 / ATCC 700964).